A 595-amino-acid chain; its full sequence is SVP1-like protein 2 (595 aa).

The tract at residues 1–28 (MVLAHSINTNPNTNTNTNNTSTTSSTTT) is disordered. Residues 30–68 (PNDSKILCINFNQDQGCFAISHEQGFLVYNTDPIELRVK) form a WD 1 repeat. Composition is skewed to low complexity over residues 76 to 112 (HTTSSRSNHSNGSNSNNNHRNNSTGSNGSVSSSGSNN) and 270 to 339 (LSPT…TTTT). Disordered stretches follow at residues 76–132 (HTTS…GSGS) and 264–342 (FSKR…TSAK). WD repeat units lie at residues 389-429 (AHKS…LLYE) and 434-473 (IDRAIITSMKFSHDDSKLAVLSDKHTLHVYNIDETQYPND). The interval 467-490 (ETQYPNDGGSGGTKDGGGGGRGSK) is disordered. The segment covering 474–488 (GGSGGTKDGGGGGRG) has biased composition (gly residues).

The protein belongs to the WD repeat PROPPIN family.

The protein localises to the vacuole membrane. It is found in the cytoplasmic vesicle membrane. Its function is as follows. Involved in mitochondrial or peroxisomal functions and amino acid signaling pathways. The sequence is that of SVP1-like protein 2 (HSV2) from Candida albicans (strain SC5314 / ATCC MYA-2876) (Yeast).